We begin with the raw amino-acid sequence, 342 residues long: Succinylglutamate desuccinylase (342 aa).

Zn(2+) is bound by residues His64, Glu67, and His159. Residue Glu222 is part of the active site.

Belongs to the AspA/AstE family. Succinylglutamate desuccinylase subfamily. Requires Zn(2+) as cofactor.

It catalyses the reaction N-succinyl-L-glutamate + H2O = L-glutamate + succinate. Its pathway is amino-acid degradation; L-arginine degradation via AST pathway; L-glutamate and succinate from L-arginine: step 5/5. Its function is as follows. Transforms N(2)-succinylglutamate into succinate and glutamate. The sequence is that of Succinylglutamate desuccinylase from Burkholderia orbicola (strain AU 1054).